The following is a 181-amino-acid chain: MATSEEILEQTIKSTIRDIVDFPEPGIIFKDITPLLKDPQLCKAIVQSITDQLRPLQPDALACLDSRGFWFGLSIAMELGIPMIPIRKKGKLPYETVYEEYALEYGTNTIEMHTDAVQPGCRVAIHDDILATGGTAEATSKLIKKAKGEIIAYSFLIELDFLKGKDKLAPYCTTIQSLINY.

This sequence belongs to the purine/pyrimidine phosphoribosyltransferase family. As to quaternary structure, homodimer.

It is found in the cytoplasm. It catalyses the reaction AMP + diphosphate = 5-phospho-alpha-D-ribose 1-diphosphate + adenine. The protein operates within purine metabolism; AMP biosynthesis via salvage pathway; AMP from adenine: step 1/1. Functionally, catalyzes a salvage reaction resulting in the formation of AMP, that is energically less costly than de novo synthesis. This is Adenine phosphoribosyltransferase from Cytophaga hutchinsonii (strain ATCC 33406 / DSM 1761 / CIP 103989 / NBRC 15051 / NCIMB 9469 / D465).